A 207-amino-acid polypeptide reads, in one-letter code: Ribosomal RNA small subunit methyltransferase G (207 aa).

Residues glycine 73, leucine 78, 124–125, and arginine 139 each bind S-adenosyl-L-methionine; that span reads VE.

Belongs to the methyltransferase superfamily. RNA methyltransferase RsmG family.

The protein resides in the cytoplasm. It carries out the reaction guanosine(527) in 16S rRNA + S-adenosyl-L-methionine = N(7)-methylguanosine(527) in 16S rRNA + S-adenosyl-L-homocysteine. Specifically methylates the N7 position of guanine in position 527 of 16S rRNA. The protein is Ribosomal RNA small subunit methyltransferase G of Klebsiella pneumoniae (strain 342).